A 420-amino-acid polypeptide reads, in one-letter code: Gamma-glutamyl phosphate reductase (420 aa).

The protein belongs to the gamma-glutamyl phosphate reductase family.

It localises to the cytoplasm. The enzyme catalyses L-glutamate 5-semialdehyde + phosphate + NADP(+) = L-glutamyl 5-phosphate + NADPH + H(+). The protein operates within amino-acid biosynthesis; L-proline biosynthesis; L-glutamate 5-semialdehyde from L-glutamate: step 2/2. Catalyzes the NADPH-dependent reduction of L-glutamate 5-phosphate into L-glutamate 5-semialdehyde and phosphate. The product spontaneously undergoes cyclization to form 1-pyrroline-5-carboxylate. This chain is Gamma-glutamyl phosphate reductase, found in Pasteurella multocida (strain Pm70).